A 386-amino-acid polypeptide reads, in one-letter code: Methionine import ATP-binding protein MetN 2 (386 aa).

In terms of domain architecture, ABC transporter spans 32 to 272 (VIFDDVGKVF…PQHDATRALL (241 aa)). 69-76 (GRSGAGKS) is a binding site for ATP.

This sequence belongs to the ABC transporter superfamily. Methionine importer (TC 3.A.1.24) family. In terms of assembly, the complex is composed of two ATP-binding proteins (MetN), two transmembrane proteins (MetI) and a solute-binding protein (MetQ).

It is found in the cell inner membrane. The enzyme catalyses L-methionine(out) + ATP + H2O = L-methionine(in) + ADP + phosphate + H(+). It catalyses the reaction D-methionine(out) + ATP + H2O = D-methionine(in) + ADP + phosphate + H(+). In terms of biological role, part of the ABC transporter complex MetNIQ involved in methionine import. Responsible for energy coupling to the transport system. This Paraburkholderia xenovorans (strain LB400) protein is Methionine import ATP-binding protein MetN 2.